The chain runs to 73 residues: Small ribosomal subunit protein bS18 (73 aa).

The protein belongs to the bacterial ribosomal protein bS18 family. As to quaternary structure, part of the 30S ribosomal subunit. Forms a tight heterodimer with protein bS6.

Functionally, binds as a heterodimer with protein bS6 to the central domain of the 16S rRNA, where it helps stabilize the platform of the 30S subunit. The protein is Small ribosomal subunit protein bS18 of Synechococcus sp. (strain RCC307).